The following is a 186-amino-acid chain: Ribosome maturation factor RimM (186 aa).

The PRC barrel domain occupies 93-166 (PDEYYDHQLM…RAVIDPPPGL (74 aa)). Residues 160-186 (IDPPPGLIDDRAEVDSSDTEAATEADA) are disordered. The span at 174 to 186 (DSSDTEAATEADA) shows a compositional bias: acidic residues.

Belongs to the RimM family. In terms of assembly, binds ribosomal protein uS19.

The protein resides in the cytoplasm. In terms of biological role, an accessory protein needed during the final step in the assembly of 30S ribosomal subunit, possibly for assembly of the head region. Essential for efficient processing of 16S rRNA. May be needed both before and after RbfA during the maturation of 16S rRNA. It has affinity for free ribosomal 30S subunits but not for 70S ribosomes. This Streptomyces avermitilis (strain ATCC 31267 / DSM 46492 / JCM 5070 / NBRC 14893 / NCIMB 12804 / NRRL 8165 / MA-4680) protein is Ribosome maturation factor RimM.